Consider the following 1049-residue polypeptide: Cilia- and flagella-associated protein 337 (1049 aa).

In terms of domain architecture, EF-hand spans 81 to 116; sequence GTKEEYGELFDKVDVAQDGFINWDKLTSFILLELYE. WD repeat units lie at residues 138–177, 358–397, 401–440, 487–528, 531–570, and 633–671; these read KHKD…QETF, NIAQ…KPVG, GHSA…SIQR, SHEK…KQFT, HGNA…HHTL, and QHHD…AHHV. A disordered region spans residues 691–712; sequence LLSAGRSQPSHPMADHSTTGVR. A compositionally biased stretch (polar residues) spans 695-711; sequence GRSQPSHPMADHSTTGV. WD repeat units follow at residues 719–766, 769–809, and 825–866; these read EGKN…LLAE, AHSG…LNSS, and PHED…VWIF.

The protein belongs to the CFAP337 family. In terms of assembly, associates with components of the nexin-dynein regulatory complex (N-DRC) and the CFAP184:CFAP263 complex.

It is found in the cell projection. Its subcellular location is the cilium. Functionally, associates with components of the nexin-dynein regulatory complex (N-DRC), a key regulator of ciliary/flagellar motility, and might act as an inner dynein arm (IDA) hub or linkage. This Homo sapiens (Human) protein is Cilia- and flagella-associated protein 337.